Here is a 485-residue protein sequence, read N- to C-terminus: FAD-dependent monooxygenase elcH (485 aa).

Residues 1–19 (MFTLRSLAILAVFAATALA) form the signal peptide. FAD contacts are provided by Asp59 and Gly73. Asn126, Asn147, and Asn157 each carry an N-linked (GlcNAc...) asparagine glycan.

This sequence belongs to the paxM FAD-dependent monooxygenase family. FAD serves as cofactor.

The protein operates within secondary metabolite biosynthesis. Functionally, FAD-dependent monooxygenase; part of the gene cluster that mediates the biosynthesis of elsinochrome C, a perelyenequinone phytotoxin structurally similar to cercosporin. The first step of elsinochrome C biosynthesis is performed by the polyketide synthase elcA which catalyzes the formation of nor-toralactone. The starter unit acyltransferase (SAT) domain of elcA initiates polyketide extension by the selective utilization of acetyl-CoA, which is elongated to the heptaketide in the beta-ketoacyl synthase (KS) domain by successive condensations with six malonyl units introduced by the malonyl acyltransferase (MAT) domain. The product template (PT) domain catalyzes C4-C9 and C2-C11 aldol cyclizations and dehydrations to a trihydroxynaphthalene, which is thought to be delivered to the thioesterase (TE) domain for product release. The bifunctional enzyme elcB then methylates nor-toralactone to toralactone before conducting an unusual oxidative aromatic ring opening. The next step in perylenequinone biosynthesis is an O-methylation at the nascent OH-6 of the elcB product performed by the O-methyltransferase elcD. The oxidative coupling of the two monomeric naphthol units in perylenequinone biosynthesis is catalyzed by the FAD-dependent monooxygenase elcE and the multicopper oxidase elcG. ElcG might catalyze the first intermolecular coupling in a regio- and stereo-selective manner via a phenol radical coupling mechanism and the elcE could forge the second C-C bond intramolecularly via a hydride transfer mechanism. The fasciclin domain-containing protein elcF might also play a role duting this step. The last piece of the puzzle in the biosynthesis of elsinochrome C is the additional annulation by enolate coupling to afford the dihydrobenzo(ghi)perylenequinone system, catalyzed by the FAD-dependent monooxygenase elcH. The protein is FAD-dependent monooxygenase elcH of Phaeosphaeria nodorum (strain SN15 / ATCC MYA-4574 / FGSC 10173) (Glume blotch fungus).